Consider the following 37-residue polypeptide: Large ribosomal subunit protein bL36 (37 aa).

Belongs to the bacterial ribosomal protein bL36 family.

This chain is Large ribosomal subunit protein bL36, found in Caldanaerobacter subterraneus subsp. tengcongensis (strain DSM 15242 / JCM 11007 / NBRC 100824 / MB4) (Thermoanaerobacter tengcongensis).